We begin with the raw amino-acid sequence, 506 residues long: GTPase Der (506 aa).

2 consecutive EngA-type G domains span residues 3–166 (PVVA…GEQL) and 218–391 (IKIA…ACAT). GTP-binding positions include 9–16 (GRPNVGKS), 56–60 (DTGGI), 118–121 (NKTD), 224–231 (GRPNVGKS), 271–275 (DTAGV), and 336–339 (NKWD). In terms of domain architecture, KH-like spans 392 to 476 (QKTSTSMLTR…PIRIQFQEGN (85 aa)).

This sequence belongs to the TRAFAC class TrmE-Era-EngA-EngB-Septin-like GTPase superfamily. EngA (Der) GTPase family. Associates with the 50S ribosomal subunit.

Functionally, GTPase that plays an essential role in the late steps of ribosome biogenesis. This chain is GTPase Der, found in Actinobacillus pleuropneumoniae serotype 3 (strain JL03).